The following is a 69-amino-acid chain: Small ribosomal subunit protein bS21 (69 aa).

The tract at residues 49 to 69 (IESAKRKAEKKKRLFSKKDKA) is disordered.

Belongs to the bacterial ribosomal protein bS21 family.

This Leptospira borgpetersenii serovar Hardjo-bovis (strain JB197) protein is Small ribosomal subunit protein bS21.